A 127-amino-acid polypeptide reads, in one-letter code: uncharacterized protein (127 aa).

Positions 1-127 (MKIVVTSIFV…CGNLIQIVQK (127 aa)) constitute a VOC domain.

The protein belongs to the glyoxalase I family.

This is an uncharacterized protein from Bacillus subtilis (strain 168).